Here is a 556-residue protein sequence, read N- to C-terminus: uncharacterized protein (556 aa).

Residues 69–129 (RRGHTSGHAS…SSARSSSTSG (61 aa)) form a disordered region. 2 stretches are compositionally biased toward low complexity: residues 74–85 (SGHASEHTSSSR) and 93–129 (SMSS…STSG). The helical transmembrane segment at 379–399 (LGLYIFIGVLLGLIGVIGLFI) threads the bilayer. Residues 498-541 (CTICLCEYSEESPLYRELPCHHIFHPACIDPYLLKNSDLCPLCK) form an RING-type; atypical zinc finger.

It localises to the vacuole membrane. The protein resides in the cell membrane. This is an uncharacterized protein from Schizosaccharomyces pombe (strain 972 / ATCC 24843) (Fission yeast).